The primary structure comprises 312 residues: Mycothiol acetyltransferase (312 aa).

2 N-acetyltransferase domains span residues 8-136 (PIIR…LPMP) and 149-301 (LRLD…HQDH). E38 lines the 1D-myo-inositol 2-(L-cysteinylamino)-2-deoxy-alpha-D-glucopyranoside pocket. Residues 77–79 (LMV) and 85–90 (RQGIAT) contribute to the acetyl-CoA site. Residues E175, K215, and E226 each contribute to the 1D-myo-inositol 2-(L-cysteinylamino)-2-deoxy-alpha-D-glucopyranoside site. Acetyl-CoA is bound by residues 230 to 232 (LGV) and 237 to 243 (EGKGVGR). Y264 contributes to the 1D-myo-inositol 2-(L-cysteinylamino)-2-deoxy-alpha-D-glucopyranoside binding site. 269-274 (NERVVH) provides a ligand contact to acetyl-CoA. The disordered stretch occupies residues 292–312 (PAKPARHQDHGRQSSPQERDA). A compositionally biased stretch (basic and acidic residues) spans 297 to 312 (RHQDHGRQSSPQERDA).

It belongs to the acetyltransferase family. MshD subfamily. As to quaternary structure, monomer.

It catalyses the reaction 1D-myo-inositol 2-(L-cysteinylamino)-2-deoxy-alpha-D-glucopyranoside + acetyl-CoA = mycothiol + CoA + H(+). Functionally, catalyzes the transfer of acetyl from acetyl-CoA to desacetylmycothiol (Cys-GlcN-Ins) to form mycothiol. The polypeptide is Mycothiol acetyltransferase (Propionibacterium freudenreichii subsp. shermanii (strain ATCC 9614 / DSM 4902 / CIP 103027 / NCIMB 8099 / CIRM-BIA1)).